The primary structure comprises 93 residues: Large ribosomal subunit protein uL23cz/uL23cy (93 aa).

It belongs to the universal ribosomal protein uL23 family. In terms of assembly, part of the 50S ribosomal subunit.

It is found in the plastid. The protein localises to the chloroplast. Its function is as follows. Binds to 23S rRNA. The polypeptide is Large ribosomal subunit protein uL23cz/uL23cy (rpl23-A) (Oenothera elata subsp. hookeri (Hooker's evening primrose)).